The following is a 197-amino-acid chain: Na(+)-translocating NADH-quinone reductase subunit E (197 aa).

Transmembrane regions (helical) follow at residues 11-31 (SVFIENMALSFFLGMCTFLAV), 35-55 (VSTAFGLGVAVIFVLGLSVPA), 76-96 (FLKFITFIGVIAALVQILEMF), 108-128 (LGIYLPLITVNCAIFGAVSFM), 139-159 (VVYGFGAGLGWMLAIVALAGI), and 175-195 (LGITFIAAGLMAMAFMSFSGI).

This sequence belongs to the NqrDE/RnfAE family. As to quaternary structure, composed of six subunits; NqrA, NqrB, NqrC, NqrD, NqrE and NqrF.

The protein resides in the cell inner membrane. It catalyses the reaction a ubiquinone + n Na(+)(in) + NADH + H(+) = a ubiquinol + n Na(+)(out) + NAD(+). Functionally, NQR complex catalyzes the reduction of ubiquinone-1 to ubiquinol by two successive reactions, coupled with the transport of Na(+) ions from the cytoplasm to the periplasm. NqrA to NqrE are probably involved in the second step, the conversion of ubisemiquinone to ubiquinol. In Neisseria gonorrhoeae (strain ATCC 700825 / FA 1090), this protein is Na(+)-translocating NADH-quinone reductase subunit E.